Consider the following 124-residue polypeptide: 14 kDa phosphohistidine phosphatase (124 aa).

K20 is a substrate binding site. H52 serves as the catalytic Proton acceptor. Residue 93–95 coordinates substrate; that stretch reads SMG.

The protein belongs to the janus family. As to quaternary structure, monomer.

It localises to the cytoplasm. It carries out the reaction N(pros)-phospho-L-histidyl-[protein] + H2O = L-histidyl-[protein] + phosphate. The catalysed reaction is N(tele)-phospho-L-histidyl-[protein] + H2O = L-histidyl-[protein] + phosphate. Its function is as follows. Exhibits phosphohistidine phosphatase activity. This is 14 kDa phosphohistidine phosphatase (Phpt1) from Mus musculus (Mouse).